A 224-amino-acid chain; its full sequence is CRP-like cAMP-activated global transcriptional regulator (224 aa).

Residues 64 to 70, 79 to 82, 89 to 90, 134 to 135, 142 to 143, and 178 to 188 each bind 3',5'-cyclic AMP; these read GRENLLT, GELS, RT, TN, IF, and EEIAQLVGASR. One can recognise an HTH crp-type domain in the interval 144 to 217; it reads TDVPGRVAKQ…GKSVLISDSE (74 aa). A DNA-binding region (H-T-H motif) is located at residues 177-196; it reads QEEIAQLVGASRETVNKALA.

In terms of assembly, homodimer.

In terms of biological role, global transcriptional regulator that complexes with cAMP and binds to specific DNA promoter sites, causing DNA-bending, to regulate transcription. cAMP improves binding to specific DNA sequences, probably by altering protein conformation. Activates expression of whiB1. This chain is CRP-like cAMP-activated global transcriptional regulator, found in Mycobacterium tuberculosis (strain CDC 1551 / Oshkosh).